The sequence spans 420 residues: UDP-N-acetylglucosamine 1-carboxyvinyltransferase 1 (420 aa).

Phosphoenolpyruvate is bound at residue 22–23 (KN). Arg91 serves as a coordination point for UDP-N-acetyl-alpha-D-glucosamine. The active-site Proton donor is Cys115. Cys115 is modified (2-(S-cysteinyl)pyruvic acid O-phosphothioketal). Residues 120 to 124 (RPMDL), Asp303, and Val325 contribute to the UDP-N-acetyl-alpha-D-glucosamine site.

The protein belongs to the EPSP synthase family. MurA subfamily.

The protein localises to the cytoplasm. It catalyses the reaction phosphoenolpyruvate + UDP-N-acetyl-alpha-D-glucosamine = UDP-N-acetyl-3-O-(1-carboxyvinyl)-alpha-D-glucosamine + phosphate. It functions in the pathway cell wall biogenesis; peptidoglycan biosynthesis. Cell wall formation. Adds enolpyruvyl to UDP-N-acetylglucosamine. The chain is UDP-N-acetylglucosamine 1-carboxyvinyltransferase 1 from Carboxydothermus hydrogenoformans (strain ATCC BAA-161 / DSM 6008 / Z-2901).